Here is a 371-residue protein sequence, read N- to C-terminus: Sensor histidine kinase YvfT (371 aa).

At 1-10 the chain is on the extracellular side; that stretch reads MKKAISIFPK. The chain crosses the membrane as a helical span at residues 11-31; that stretch reads EFGFFPYIFLVYTIMPFLSLL. Residues 32 to 38 lie on the Cytoplasmic side of the membrane; sequence KESGVKQ. The chain crosses the membrane as a helical span at residues 39 to 59; it reads GIGYGMLLLFVAAYRQLFCSV. The Extracellular segment spans residues 60–71; it reads GKASFTYWLIVQ. Residues 72–92 form a helical membrane-spanning segment; the sequence is MAVILMYSVFYNITYIYLGFF. The Cytoplasmic portion of the chain corresponds to 93-109; the sequence is PANFVGYYKEKTNFNRA. Residues 110-130 form a helical membrane-spanning segment; that stretch reads FCALIFILLFPCLYQFIANSV. Topologically, residues 131 to 135 are extracellular; sequence SLREL. A helical transmembrane segment spans residues 136–156; the sequence is FSVLPFLVIMLISPFGIRSMF. Residues 157–371 are Cytoplasmic-facing; it reads RRIELEAKLA…LTIPLIKKAE (215 aa). In terms of domain architecture, Histidine kinase spans 187–368; sequence DLHDTLGHTL…VVALTIPLIK (182 aa). His189 carries the post-translational modification Phosphohistidine; by autocatalysis.

It localises to the cell membrane. It catalyses the reaction ATP + protein L-histidine = ADP + protein N-phospho-L-histidine.. Member of the two-component regulatory system YvfT/YvfU. Probably activates YvfU by phosphorylation. The polypeptide is Sensor histidine kinase YvfT (yvfT) (Bacillus subtilis (strain 168)).